A 270-amino-acid chain; its full sequence is Interleukin-1 alpha (270 aa).

Residues 1-114 (MAKVPDLFED…HDLEETIQPR (114 aa)) constitute a propeptide that is removed on maturation. N-linked (GlcNAc...) asparagine glycosylation occurs at Asn-46. N6-acetyllysine is present on Lys-85. Positions 85–89 (KKRRL) are nuclear localization signal (NLS). Position 90 is a phosphoserine (Ser-90). Asn-139 carries an N-linked (GlcNAc...) asparagine glycan.

It belongs to the IL-1 family. As to quaternary structure, monomer. Interacts with TMED10; the interaction mediates the translocation from the cytoplasm into the ERGIC (endoplasmic reticulum-Golgi intermediate compartment) and thereby secretion. Interacts with IL1R1. Interacts with S100A13; this interaction is the first step in the export of IL1A, followed by direct translocation of this complex across the plasma membrane. In terms of processing, acetylated within its nuclear localization sequence, which impacts subcellular localization. Proteolytic processed by CAPN1 in a calcium-dependent manner. Cleavage from 31 kDa precursor to 18 kDa biologically active molecules. Post-translationally, phosphorylated. Phosphorylation greatly enhances susceptibility to digestion and promotes the conversion of pre-IL1A alpha to the biologically active IL1A.

It is found in the nucleus. It localises to the cytoplasm. The protein localises to the secreted. Its function is as follows. Cytokine constitutively present intracellularly in nearly all resting non-hematopoietic cells that plays an important role in inflammation and bridges the innate and adaptive immune systems. After binding to its receptor IL1R1 together with its accessory protein IL1RAP, forms the high affinity interleukin-1 receptor complex. Signaling involves the recruitment of adapter molecules such as MYD88, IRAK1 or IRAK4. In turn, mediates the activation of NF-kappa-B and the three MAPK pathways p38, p42/p44 and JNK pathways. Within the cell, acts as an alarmin and cell death results in its liberation in the extracellular space after disruption of the cell membrane to induce inflammation and alert the host to injury or damage. In addition to its role as a danger signal, which occurs when the cytokine is passively released by cell necrosis, directly senses DNA damage and acts as signal for genotoxic stress without loss of cell integrity. This is Interleukin-1 alpha from Rattus norvegicus (Rat).